The sequence spans 831 residues: Translation initiation factor IF-2 (831 aa).

The tr-type G domain occupies 329–499 (TRAPVVTVMG…LLIAEMQDLK (171 aa)). The G1 stretch occupies residues 338-345 (GHVDHGKT). GTP is bound at residue 338 to 345 (GHVDHGKT). Residues 363 to 367 (GITQH) are G2. The interval 385–388 (DTPG) is G3. GTP is bound by residues 385–389 (DTPGH) and 439–442 (NKID). The G4 stretch occupies residues 439 to 442 (NKID). The tract at residues 475–477 (SAL) is G5.

This sequence belongs to the TRAFAC class translation factor GTPase superfamily. Classic translation factor GTPase family. IF-2 subfamily.

It is found in the cytoplasm. One of the essential components for the initiation of protein synthesis. Protects formylmethionyl-tRNA from spontaneous hydrolysis and promotes its binding to the 30S ribosomal subunits. Also involved in the hydrolysis of GTP during the formation of the 70S ribosomal complex. This Rickettsia massiliae (strain Mtu5) protein is Translation initiation factor IF-2.